Here is a 268-residue protein sequence, read N- to C-terminus: Putative type I specificity subunit S.MpnORF365P (268 aa).

Belongs to the type-I restriction system S methylase family. As to quaternary structure, the methyltransferase is composed of M and S polypeptides.

In terms of biological role, the specificity (S) subunit of a type I methyltransferase (MTase); this subunit dictates DNA sequence specificity. The single R subunit has multiple frameshifts and is probably not expressed. The chain is Putative type I specificity subunit S.MpnORF365P from Mycoplasma pneumoniae (strain ATCC 29342 / M129 / Subtype 1) (Mycoplasmoides pneumoniae).